We begin with the raw amino-acid sequence, 108 residues long: UPF0102 protein Sfri_0388 (108 aa).

Belongs to the UPF0102 family.

The polypeptide is UPF0102 protein Sfri_0388 (Shewanella frigidimarina (strain NCIMB 400)).